The following is a 273-amino-acid chain: Ribonuclease PH (273 aa).

Residues Arg86 and 124–126 each bind phosphate; that span reads GTR. The disordered stretch occupies residues 254–273; sequence GHQEPGEGAGVSLAPGGGGL.

It belongs to the RNase PH family. Homohexameric ring arranged as a trimer of dimers.

It carries out the reaction tRNA(n+1) + phosphate = tRNA(n) + a ribonucleoside 5'-diphosphate. In terms of biological role, phosphorolytic 3'-5' exoribonuclease that plays an important role in tRNA 3'-end maturation. Removes nucleotide residues following the 3'-CCA terminus of tRNAs; can also add nucleotides to the ends of RNA molecules by using nucleoside diphosphates as substrates, but this may not be physiologically important. Probably plays a role in initiation of 16S rRNA degradation (leading to ribosome degradation) during starvation. In Symbiobacterium thermophilum (strain DSM 24528 / JCM 14929 / IAM 14863 / T), this protein is Ribonuclease PH.